The sequence spans 173 residues: Large ribosomal subunit protein uL14mz (173 aa).

A mitochondrion-targeting transit peptide spans 1–61 (MAAAFASRLT…TVLKVVDNSG (61 aa)).

The protein belongs to the universal ribosomal protein uL14 family. Part of the mitochondrial 50S ribosomal subunit. Mostly expressed in leaves and inflorescences, including floral organs and meristems, and, to a lower extent, in pistils.

It is found in the mitochondrion. Functionally, binds to 23S rRNA in mitochondrion. In Arabidopsis thaliana (Mouse-ear cress), this protein is Large ribosomal subunit protein uL14mz (HLP).